Reading from the N-terminus, the 494-residue chain is Zinc metalloproteinase/disintegrin (494 aa).

The N-terminal stretch at 1 to 20 is a signal peptide; that stretch reads MIQVLLVTICLAVFPFQGSS. The propeptide occupies 21–193; the sequence is KTLKSGNVND…KKASHLVATS (173 aa). In terms of domain architecture, Peptidase M12B spans 201–396; the sequence is RYVQLVIVAD…HNPPCILNQA (196 aa). 3 cysteine pairs are disulfide-bonded: cysteine 311/cysteine 391, cysteine 351/cysteine 375, and cysteine 353/cysteine 358. A Zn(2+)-binding site is contributed by histidine 336. Glutamate 337 is a catalytic residue. Residues histidine 340 and histidine 346 each coordinate Zn(2+). Positions 410-431 are excised as a propeptide; it reads ELLQNSVNPCYDPVTCQPKEKE. The Disintegrin domain maps to 417–478; that stretch reads NPCYDPVTCQ…DCPRNPYKGE (62 aa). 4 cysteine pairs are disulfide-bonded: cysteine 433-cysteine 442, cysteine 438-cysteine 463, cysteine 439-cysteine 468, and cysteine 451-cysteine 470. A Cell attachment site motif is present at residues 455–457; it reads RGD. The propeptide occupies 482–494; sequence MEWPAPAKGSVLM.

Belongs to the venom metalloproteinase (M12B) family. P-II subfamily. P-IIa sub-subfamily. As to quaternary structure, monomer (disintegrin). As to expression, expressed by the venom gland.

It is found in the secreted. Its function is as follows. Impairs hemostasis in the envenomed animal. Functionally, inhibits ADP-induced platelet aggregation (IC(50)=168 nM). Inhibits alpha-5/beta-1 (ITGA5/ITGB1) integrin and induces the expression of a ligand-induced binding site epitope on beta-1 integrin subunit. Has a direct chemotactic stimulus on human neutrophils in vitro. The chain is Zinc metalloproteinase/disintegrin from Echis ocellatus (Ocellated saw-scaled viper).